The sequence spans 173 residues: 2-C-methyl-D-erythritol 2,4-cyclodiphosphate synthase (173 aa).

A divalent metal cation-binding residues include aspartate 17 and histidine 19. Residues 17–19 and 49–50 each bind 4-CDP-2-C-methyl-D-erythritol 2-phosphate; these read DVH and HS. Histidine 57 is a binding site for a divalent metal cation. Residues 76-80, 147-150, and arginine 157 each bind 4-CDP-2-C-methyl-D-erythritol 2-phosphate; these read FPNTD and TTTE.

Belongs to the IspF family. In terms of assembly, homotrimer. Requires a divalent metal cation as cofactor.

The enzyme catalyses 4-CDP-2-C-methyl-D-erythritol 2-phosphate = 2-C-methyl-D-erythritol 2,4-cyclic diphosphate + CMP. It functions in the pathway isoprenoid biosynthesis; isopentenyl diphosphate biosynthesis via DXP pathway; isopentenyl diphosphate from 1-deoxy-D-xylulose 5-phosphate: step 4/6. Involved in the biosynthesis of isopentenyl diphosphate (IPP) and dimethylallyl diphosphate (DMAPP), two major building blocks of isoprenoid compounds. Catalyzes the conversion of 4-diphosphocytidyl-2-C-methyl-D-erythritol 2-phosphate (CDP-ME2P) to 2-C-methyl-D-erythritol 2,4-cyclodiphosphate (ME-CPP) with a corresponding release of cytidine 5-monophosphate (CMP). This chain is 2-C-methyl-D-erythritol 2,4-cyclodiphosphate synthase, found in Ehrlichia ruminantium (strain Gardel).